We begin with the raw amino-acid sequence, 389 residues long: Stilbene synthase 1 (389 aa).

55 to 58 is a substrate binding site; sequence KFQR. Cys-164 is a catalytic residue. Residues Leu-267 and 305 to 307 contribute to the substrate site; that span reads GGR.

The protein belongs to the thiolase-like superfamily. Chalcone/stilbene synthases family. As to quaternary structure, homodimer.

The protein resides in the cytoplasm. It catalyses the reaction 4-coumaroyl-CoA + 3 malonyl-CoA + 3 H(+) = trans-resveratrol + 4 CO2 + 4 CoA. Its pathway is phytoalexin biosynthesis; 3,4',5-trihydroxystilbene biosynthesis; 3,4',5-trihydroxystilbene from trans-4-coumarate: step 2/2. In Arachis hypogaea (Peanut), this protein is Stilbene synthase 1.